A 166-amino-acid chain; its full sequence is Co-chaperone protein HscB homolog (166 aa).

Residues 3–75 enclose the J domain; sequence QYFTLFRIEP…IDRAAYLLKT (73 aa).

It belongs to the HscB family. As to quaternary structure, interacts with HscA and stimulates its ATPase activity.

Its function is as follows. Co-chaperone involved in the maturation of iron-sulfur cluster-containing proteins. Seems to help targeting proteins to be folded toward HscA. The polypeptide is Co-chaperone protein HscB homolog (Neisseria gonorrhoeae (strain NCCP11945)).